A 321-amino-acid polypeptide reads, in one-letter code: Taste receptor type 2 member 135 (321 aa).

Residues 1-28 lie on the Extracellular side of the membrane; sequence MGPIMSTGETSTAHTVLGCQITDKTVIT. Residues 29–49 form a helical membrane-spanning segment; the sequence is LFVILVFSCLVAVVGNGFIII. Residues 50–75 lie on the Cytoplasmic side of the membrane; it reads ALGMKWLLRRTLSAHNKLLISLAASR. A helical transmembrane segment spans residues 76-96; sequence FCLQCVVIGKNIYVFLNPSSF. Residues 97–106 lie on the Extracellular side of the membrane; sequence PYNPVIQLLN. Residues 107–127 form a helical membrane-spanning segment; sequence LMWDFLTAATIWFCSLLGFFY. Topologically, residues 128–149 are cytoplasmic; it reads CVKIATLTHPVFVWLKYRLPGW. The chain crosses the membrane as a helical span at residues 150–170; it reads VPWMLLSAVGMSSLTSILCFI. Residues 171-207 lie on the Extracellular side of the membrane; sequence GNHMIYQNYARRGHQPWNATGNSLRHSLEKFYFISIK. Asparagine 188 carries N-linked (GlcNAc...) asparagine glycosylation. The helical transmembrane segment at 208-228 threads the bilayer; the sequence is IIMWTVPTVIFSIFMSLLLVS. Residues 229 to 253 are Cytoplasmic-facing; it reads LVRHMKKTLLALSELRDVWAQAHFK. A helical transmembrane segment spans residues 254 to 274; it reads ALLPLLSFIILFISCFLTLVL. Topologically, residues 275–286 are extracellular; it reads SSASSTPYQEFR. A helical membrane pass occupies residues 287–307; the sequence is YWMWQVVIHLCTVIHPIVILL. The Cytoplasmic portion of the chain corresponds to 308 to 321; the sequence is SNPVLRVVMKRGCC.

Belongs to the G-protein coupled receptor T2R family.

The protein localises to the membrane. Its function is as follows. Putative taste receptor which may play a role in the perception of bitterness. The polypeptide is Taste receptor type 2 member 135 (Rattus norvegicus (Rat)).